The sequence spans 83 residues: Small ribosomal subunit protein bS20 (83 aa).

This sequence belongs to the bacterial ribosomal protein bS20 family.

Its function is as follows. Binds directly to 16S ribosomal RNA. The protein is Small ribosomal subunit protein bS20 of Staphylococcus aureus (strain JH1).